Consider the following 78-residue polypeptide: MQTAYWVMVMVMVWITAPLSEGGKPNDVIRGLVPDDLTPQLILRSLISRRRSDKDVGKRMECYWKSCSRPLSRRHDLG.

A signal peptide spans 1 to 22; it reads MQTAYWVMVMVMVWITAPLSEG. Positions 23–59 are excised as a propeptide; it reads GKPNDVIRGLVPDDLTPQLILRSLISRRRSDKDVGKR. Glu61 is modified (4-carboxyglutamate). Cys62 and Cys67 form a disulfide bridge. Trp64 is modified (D-tryptophan). Pro70 is modified (4-hydroxyproline). Residues 71-78 constitute a propeptide that is removed on maturation; it reads LSRRHDLG.

The protein belongs to the conotoxin C superfamily. Consomatin family. As to expression, expressed by the venom duct.

The protein localises to the secreted. In terms of biological role, moderately activates human somatostatin receptors (SSTR) with a preferential activation of SSTR1 and SSTR4. In vivo, does not cause behavioral changes in mice within a few minutes of intracranial injection, but causes a progressive loss of movement thereafter. Four to five hours after injection, mice recover, even with the highest dose tested. Shows antinociception and antihyperalgesia activities in two mouse models of acute pain, most probably by acting outside the central nervous system. In Conus neocostatus (Cone snail), this protein is Consomatin Nc1.